The primary structure comprises 318 residues: Protoheme IX farnesyltransferase (318 aa).

A run of 9 helical transmembrane segments spans residues 37–57 (LVIF…HPVI), 58–78 (AFTA…LNMW), 100–120 (VTAR…VMTM), 122–142 (VLVN…YLVV), 155–175 (IVIG…AVTG), 182–202 (FVLF…LALY), 228–248 (IMLY…LGFA), 251–271 (LYMG…FGIW), and 291–311 (ILYL…GLGG).

The protein belongs to the UbiA prenyltransferase family. Protoheme IX farnesyltransferase subfamily.

It is found in the cell inner membrane. It catalyses the reaction heme b + (2E,6E)-farnesyl diphosphate + H2O = Fe(II)-heme o + diphosphate. The protein operates within porphyrin-containing compound metabolism; heme O biosynthesis; heme O from protoheme: step 1/1. Converts heme B (protoheme IX) to heme O by substitution of the vinyl group on carbon 2 of heme B porphyrin ring with a hydroxyethyl farnesyl side group. The protein is Protoheme IX farnesyltransferase of Parvibaculum lavamentivorans (strain DS-1 / DSM 13023 / NCIMB 13966).